A 496-amino-acid chain; its full sequence is Fibronectin type III and SPRY domain-containing protein 1 (496 aa).

A coiled-coil region spans residues 4–99 (QREALRKIIK…ALESSEELLE (96 aa)). In terms of domain architecture, COS spans 105–162 (LQAMDSEDFPQAAKQIKDGVTMAPAFRLSLKAKVSDNMSHLMVDFAQERQMLQALKFL). One can recognise a Fibronectin type-III domain in the interval 164–268 (VPSAPVIDLA…EPVTLETPAF (105 aa)). Residues 268-477 (FMFRLDASTS…VTTGLQVPSA (210 aa)) form the B30.2/SPRY domain. The segment at 301–336 (KAREKDGKGRTASPINSPARGTPSPKRMPSGRGGRD) is disordered. Arginine 310 and arginine 320 each carry omega-N-methylarginine.

As to quaternary structure, oligomerization is required for binding to microtubules. As to expression, highly expressed in brain tissues, including cerebellum, cerebral cortex, medulla, occipital pole, frontal lobe, temporal lobe and putamen. Lower expression in spinal cord.

The protein resides in the cytoplasm. It localises to the cytoskeleton. Its subcellular location is the microtubule organizing center. The protein localises to the centrosome. It is found in the nucleus. The protein resides in the cleavage furrow. In terms of biological role, may be involved in microtubule organization and stabilization. In Homo sapiens (Human), this protein is Fibronectin type III and SPRY domain-containing protein 1 (FSD1).